A 143-amino-acid chain; its full sequence is Large ribosomal subunit protein uL13 (143 aa).

It belongs to the universal ribosomal protein uL13 family. In terms of assembly, part of the 50S ribosomal subunit.

In terms of biological role, this protein is one of the early assembly proteins of the 50S ribosomal subunit, although it is not seen to bind rRNA by itself. It is important during the early stages of 50S assembly. The polypeptide is Large ribosomal subunit protein uL13 (Solibacter usitatus (strain Ellin6076)).